Consider the following 190-residue polypeptide: Heme-binding protein 1 (190 aa).

The protein belongs to the HEBP family. In terms of assembly, monomer. Ubiquitously expressed. Extremely abundant in liver.

The protein resides in the cytoplasm. Functionally, may bind free porphyrinogens that may be present in the cell and thus facilitate removal of these potentially toxic compound. Binds with a high affinity to one molecule of heme or porphyrins. It binds metalloporphyrins, free porphyrins and N-methylprotoporphyrin with similar affinities. The polypeptide is Heme-binding protein 1 (Hebp1) (Mus musculus (Mouse)).